The sequence spans 156 residues: Small ribosomal subunit protein uS7 (156 aa).

The protein belongs to the universal ribosomal protein uS7 family. As to quaternary structure, part of the 30S ribosomal subunit. Contacts proteins S9 and S11.

In terms of biological role, one of the primary rRNA binding proteins, it binds directly to 16S rRNA where it nucleates assembly of the head domain of the 30S subunit. Is located at the subunit interface close to the decoding center, probably blocks exit of the E-site tRNA. This chain is Small ribosomal subunit protein uS7, found in Mycobacterium leprae (strain TN).